Consider the following 556-residue polypeptide: Potassium-transporting ATPase potassium-binding subunit (556 aa).

A run of 10 helical transmembrane segments spans residues 1 to 21 (MTWI…GIAQ), 60 to 80 (SYAR…YALQ), 130 to 150 (GLCV…VALI), 173 to 193 (LRIL…GGAV), 245 to 265 (PQPW…FSLP), 281 to 301 (ILAA…AAEF), 374 to 394 (GLYG…LLVG), 416 to 436 (ILVM…VPGL), 482 to 502 (AALG…ILAL), and 529 to 549 (LIVF…LTLG).

The protein belongs to the KdpA family. As to quaternary structure, the system is composed of three essential subunits: KdpA, KdpB and KdpC.

The protein resides in the cell membrane. Part of the high-affinity ATP-driven potassium transport (or Kdp) system, which catalyzes the hydrolysis of ATP coupled with the electrogenic transport of potassium into the cytoplasm. This subunit binds the extracellular potassium ions and delivers the ions to the membrane domain of KdpB through an intramembrane tunnel. In Cutibacterium acnes (strain DSM 16379 / KPA171202) (Propionibacterium acnes), this protein is Potassium-transporting ATPase potassium-binding subunit.